The sequence spans 227 residues: Mitochondrial cardiolipin hydrolase (227 aa).

Residues 1–14 (MDVFKQMSFKELMK) lie on the Mitochondrial intermembrane side of the membrane. The chain crosses the membrane as a helical span at residues 15-33 (VLGLGTVAFVLGVEWLNWL). Topologically, residues 34-227 (TRRLRDSRGP…LQSKNGQIKK (194 aa)) are cytoplasmic. The PLD phosphodiesterase domain occupies 153–180 (SAVHMHHKFALVDGRKLISGSLNWTLTA). Catalysis depends on residues His158, Lys160, and Asp165.

The protein belongs to the phospholipase D family. MitoPLD/Zucchini subfamily. In terms of assembly, homodimer.

The protein resides in the mitochondrion outer membrane. It carries out the reaction a cardiolipin + H2O = a 1,2-diacyl-sn-glycero-3-phospho-(1'-sn-glycerol) + a 1,2-diacyl-sn-glycero-3-phosphate + H(+). Presents phospholipase and nuclease activities, depending on the different physiological conditions. Plays a key role in mitochondrial fusion and fission via its phospholipase activity. In its phospholipase role, it uses the mitochondrial lipid cardiolipin as substrate to generate phosphatidate (PA or 1,2-diacyl-sn-glycero-3-phosphate), a second messenger signaling lipid. Production of PA facilitates Mitofusin-mediated fusion, whereas the cleavage of PA by the Lipin family of phosphatases produces diacylgycerol (DAG) which promotes mitochondrial fission. Regulates mitochondrial shape through facilitating mitochondrial fusion. During spermatogenesis, plays a critical role in PIWI-interacting RNA (piRNA) biogenesis. piRNAs provide essential protection against the activity of mobile genetic elements. piRNA-mediated transposon silencing is thus critical for maintaining genome stability, in particular in germline cells when transposons are mobilized as a consequence of wide-spread genomic demethylation. Has been shown to be a backbone-non-specific, single strand-specific nuclease, cleaving either RNA or DNA substrates with similar affinity. Produces 5' phosphate and 3' hydroxyl termini, suggesting it could directly participate in the processing of primary piRNA transcripts. Has been proposed to act as a cardiolipin hydrolase to generate phosphatidic acid at mitochondrial surface. Although it cannot be excluded that it can act as a phospholipase in some circumstances, this activity could not be confirmed. This is Mitochondrial cardiolipin hydrolase (pld6) from Danio rerio (Zebrafish).